The following is a 122-amino-acid chain: MRASPTPWLSRAEPYCQRESPMNLLTTTPAGDRYVTFNGIDFEGNMARVLAHLRRYIDDPRTGNAFWDRFKARLAAAESGGNAFQDKLLLLHSHVYYMGDLFEDQEDEAALADLRKLEEECF.

It belongs to the CowN family.

In terms of biological role, is required to sustain N(2)-dependent growth in the presence of low levels of carbon monoxide (CO). Probably acts by protecting the N(2) fixation ability of the nitrogenase complex, which is inactivated in the presence of CO. The sequence is that of N(2)-fixation sustaining protein CowN from Azorhizobium caulinodans (strain ATCC 43989 / DSM 5975 / JCM 20966 / LMG 6465 / NBRC 14845 / NCIMB 13405 / ORS 571).